The chain runs to 86 residues: Exodeoxyribonuclease 7 small subunit (86 aa).

It belongs to the XseB family. Heterooligomer composed of large and small subunits.

Its subcellular location is the cytoplasm. The enzyme catalyses Exonucleolytic cleavage in either 5'- to 3'- or 3'- to 5'-direction to yield nucleoside 5'-phosphates.. Bidirectionally degrades single-stranded DNA into large acid-insoluble oligonucleotides, which are then degraded further into small acid-soluble oligonucleotides. The protein is Exodeoxyribonuclease 7 small subunit of Bacillus licheniformis (strain ATCC 14580 / DSM 13 / JCM 2505 / CCUG 7422 / NBRC 12200 / NCIMB 9375 / NCTC 10341 / NRRL NRS-1264 / Gibson 46).